A 797-amino-acid chain; its full sequence is Ribosome biogenesis protein BOP1 homolog (797 aa).

Disordered regions lie at residues 22-112 and 149-177; these read LVPS…GGGP and SICA…RNTV. Over residues 61 to 73 the composition is skewed to low complexity; it reads AGAAAAAVEGTAA. Positions 74-87 are enriched in acidic residues; the sequence is PEDEAADNSSEEDA. Over residues 90 to 112 the composition is skewed to gly residues; the sequence is GSHGEGAGEGGGSGTWPGNGGGP. WD repeat units lie at residues 462–502, 504–544, 581–623, 626–664, 667–706, 710–749, and 766–797; these read GHMG…CWRT, VLEG…EEAE, RLRF…SQNP, KNRG…LAKK, GGGG…KPYK, YHSA…DLLT, and TASE…LYCN.

Belongs to the WD repeat BOP1/ERB1 family.

It is found in the nucleus. It localises to the nucleolus. The protein resides in the nucleoplasm. Its function is as follows. Required for maturation of ribosomal RNAs and formation of the large ribosomal subunit. This chain is Ribosome biogenesis protein BOP1 homolog, found in Chlamydomonas reinhardtii (Chlamydomonas smithii).